The primary structure comprises 252 residues: MSLAKRIVPCLDVHAGRVVKGVNFVNLRDAGDPVEAARAYDEAGADELVFLDISATHEERAILLDVVARVAERVFIPLTVGGGVRSLEDARKLLLSGADKVSVNSAAVRRPELIRELADHFGAQAVVLAIDARWRGDFPEVYVAGGRVPTGLHAVEWAVKGVELGAGEILLTSMDRDGTKEGYDLRLTRMVAEAVGVPVIASGGAGRMEHFLEAFQAGAEAALAASVFHFGEIPIPELKRYLAEKGVHVRLD.

Residues aspartate 12 and aspartate 131 contribute to the active site.

It belongs to the HisA/HisF family. Heterodimer of HisH and HisF.

It is found in the cytoplasm. It carries out the reaction 5-[(5-phospho-1-deoxy-D-ribulos-1-ylimino)methylamino]-1-(5-phospho-beta-D-ribosyl)imidazole-4-carboxamide + L-glutamine = D-erythro-1-(imidazol-4-yl)glycerol 3-phosphate + 5-amino-1-(5-phospho-beta-D-ribosyl)imidazole-4-carboxamide + L-glutamate + H(+). It functions in the pathway amino-acid biosynthesis; L-histidine biosynthesis; L-histidine from 5-phospho-alpha-D-ribose 1-diphosphate: step 5/9. IGPS catalyzes the conversion of PRFAR and glutamine to IGP, AICAR and glutamate. The HisF subunit catalyzes the cyclization activity that produces IGP and AICAR from PRFAR using the ammonia provided by the HisH subunit. The polypeptide is Imidazole glycerol phosphate synthase subunit HisF (Thermus thermophilus (strain ATCC BAA-163 / DSM 7039 / HB27)).